The primary structure comprises 241 residues: Homeobox protein TGIF2LX (241 aa).

2 disordered regions span residues 1 to 58 and 125 to 207; these read MEAA…GNLP and KTGK…ELVS. A compositionally biased stretch (polar residues) spans 10 to 39; sequence ETQSPVQKDSPAKTQSPAQDTSIMSRNNAD. The homeobox; TALE-type DNA-binding region spans 48 to 111; sequence EHKKKRKGNL…INARRRILPD (64 aa).

Belongs to the TALE/TGIF homeobox family.

The protein resides in the nucleus. Functionally, may have a transcription role in testis. This is Homeobox protein TGIF2LX (TGIF2LX) from Pan troglodytes (Chimpanzee).